A 1886-amino-acid chain; its full sequence is Highly reducing polyketide synthase (1886 aa).

Residues 11–434 (TQDVAIVGLS…GANAHAVLDD (424 aa)) form the Ketosynthase family 3 (KS3) domain. Catalysis depends on for beta-ketoacyl synthase activity residues Cys-182, His-317, and His-357. The malonyl-CoA:ACP transacylase (MAT) domain stretch occupies residues 483 to 568 (FLFSGQDQQS…VNNDLANTKK (86 aa)). Residues 616–750 (RSLIGAPQPS…GLLSIEYESS (135 aa)) are N-terminal hotdog fold. Residues 616-926 (RSLIGAPQPS…CTAISEATNP (311 aa)) enclose the PKS/mFAS DH domain. A dehydratase (DH) domain region spans residues 618 to 924 (LIGAPQPSYG…LHCTAISEAT (307 aa)). The active-site Proton acceptor; for dehydratase activity is His-648. Residues 778–926 (HTTQSPKALY…CTAISEATNP (149 aa)) form a C-terminal hotdog fold region. Catalysis depends on Asp-838, which acts as the Proton donor; for dehydratase activity. An enoylreductase (ER) domain region spans residues 1169–1480 (GMLDEIYFEA…AGKHMGKVAL (312 aa)). The tract at residues 1503 to 1681 (ATYVLVGGFG…VSLDLGLMRD (179 aa)) is catalytic ketoreductase (KRc) domain. Positions 1802 to 1879 (DVTDLVLEIL…DLVDKIVAKS (78 aa)) constitute a Carrier domain. Residue Ser-1839 is modified to O-(pantetheine 4'-phosphoryl)serine.

The protein operates within mycotoxin biosynthesis. Its function is as follows. Highly reducing polyketide synthase; part of the gene cluster that mediates the biosynthesis of the selective antifungal agent ascochitine, an o-quinone methide that plays a possible protective role against other microbial competitors in nature and is considered to be important for pathogenicity of legume-associated Didymella species. The pathway probably begins with the synthesis of a keto-aldehyde intermediate by the ascochitine non-reducing polyketide synthase pksAC from successive condensations of 4 malonyl-CoA units, presumably with a simple acetyl-CoA starter unit. Release of the keto-aldehyde intermediate is consistent with the presence of the C-terminal reductive release domain. The HR-PKS (orf7) probably makes a diketide starter unit which is passed to the non-reducing polyketide synthase pksAC for further extension, producing ascochital and ascochitine. The aldehyde dehydrogenase (orf1), the 2-oxoglutarate-dependent dioxygenase (orf3) and the dehydrogenase (orf9) are probably involved in subsequent oxidations of methyl groups to the carboxylic acid of the heterocyclic ring. The ascochitine gene cluster also includes a gene encoding a short peptide with a cupin domain (orf2) that is often found in secondary metabolite gene clusters and which function has still to be determined. This Didymella fabae (Leaf and pod spot disease fungus) protein is Highly reducing polyketide synthase.